We begin with the raw amino-acid sequence, 1174 residues long: RecBCD enzyme subunit RecB (1174 aa).

The DNA-binding and helicase activity, interacts with RecC stretch occupies residues 1–852; it reads MKIDSLKEKL…GGKTMNYEGL (852 aa). The UvrD-like helicase ATP-binding domain occupies 4–449; sequence DSLKEKLNIF…YYLDTNWRSS (446 aa). ATP is bound at residue 25-32; the sequence is ASAGTGKT. The region spanning 479–745 is the UvrD-like helicase C-terminal domain; sequence PSSKNLKMNF…KIITIHKSKG (267 aa). A nuclease activity, interacts with RecD and RecA region spans residues 900–1174; the sequence is TWSITSFSQL…LIKKTMTLIS (275 aa). Mg(2+) is bound by residues H957, D1068, and D1081. D1081 acts as the For nuclease activity in catalysis.

This sequence belongs to the helicase family. UvrD subfamily. As to quaternary structure, heterotrimer of RecB, RecC and RecD. All subunits contribute to DNA-binding. Interacts with RecA. Mg(2+) serves as cofactor.

It carries out the reaction Exonucleolytic cleavage (in the presence of ATP) in either 5'- to 3'- or 3'- to 5'-direction to yield 5'-phosphooligonucleotides.. The enzyme catalyses Couples ATP hydrolysis with the unwinding of duplex DNA by translocating in the 3'-5' direction.. The catalysed reaction is ATP + H2O = ADP + phosphate + H(+). In terms of biological role, a helicase/nuclease that prepares dsDNA breaks (DSB) for recombinational DNA repair. Binds to DSBs and unwinds DNA via a highly rapid and processive ATP-dependent bidirectional helicase activity. Unwinds dsDNA until it encounters a Chi (crossover hotspot instigator) sequence from the 3' direction. Cuts ssDNA a few nucleotides 3' to the Chi site. The properties and activities of the enzyme are changed at Chi. The Chi-altered holoenzyme produces a long 3'-ssDNA overhang and facilitates RecA-binding to the ssDNA for homologous DNA recombination and repair. Holoenzyme degrades any linearized DNA that is unable to undergo homologous recombination. In the holoenzyme this subunit contributes ATPase, 3'-5' helicase, exonuclease activity and loads RecA onto ssDNA. The chain is RecBCD enzyme subunit RecB from Buchnera aphidicola subsp. Acyrthosiphon pisum (strain APS) (Acyrthosiphon pisum symbiotic bacterium).